Here is a 28-residue protein sequence, read N- to C-terminus: VGCEECPMHCKGKNAKPTCDNGVCNCNV.

3 disulfides stabilise this stretch: Cys3–Cys19, Cys6–Cys24, and Cys10–Cys26.

It belongs to the short scorpion toxin superfamily. Potassium channel inhibitor family. Alpha-KTx 09 subfamily. In terms of tissue distribution, expressed by the venom gland.

The protein localises to the secreted. In terms of biological role, inhibits voltage-gated potassium channels. The sequence is that of Potassium channel toxin alpha-KTx 9.3 from Aegaeobuthus nigrocinctus (Scorpion).